We begin with the raw amino-acid sequence, 222 residues long: Large ribosomal subunit protein uL1 (222 aa).

This sequence belongs to the universal ribosomal protein uL1 family. As to quaternary structure, part of the 50S ribosomal subunit.

Its function is as follows. Binds directly to 23S rRNA. Probably involved in E site tRNA release. Functionally, protein L1 is also a translational repressor protein, it controls the translation of its operon by binding to its mRNA. The chain is Large ribosomal subunit protein uL1 from Pyrobaculum aerophilum (strain ATCC 51768 / DSM 7523 / JCM 9630 / CIP 104966 / NBRC 100827 / IM2).